Consider the following 64-residue polypeptide: MAKKGTRVVVTLECTEARTSSDPKRSNGVSRYTTEKNRRNTTERLELKKFNPHLNRMTIHKEIK.

Basic and acidic residues-rich tracts occupy residues 16–25 and 33–42; these read EARTSSDPKR and TTEKNRRNTT. The disordered stretch occupies residues 16-42; the sequence is EARTSSDPKRSNGVSRYTTEKNRRNTT.

Belongs to the bacterial ribosomal protein bL33 family.

In Prochlorococcus marinus (strain MIT 9301), this protein is Large ribosomal subunit protein bL33.